A 395-amino-acid polypeptide reads, in one-letter code: Tyrosine--tRNA ligase (395 aa).

Positions 42-51 (PTAPDIHLGH) match the 'HIGH' region motif. The 'KMSKS' region motif lies at 226–230 (KMSKS). Lysine 229 contributes to the ATP binding site. In terms of domain architecture, S4 RNA-binding spans 334–394 (IGLATLLKEA…GKRKFARVTV (61 aa)).

This sequence belongs to the class-I aminoacyl-tRNA synthetase family. TyrS type 2 subfamily. In terms of assembly, homodimer.

Its subcellular location is the cytoplasm. It carries out the reaction tRNA(Tyr) + L-tyrosine + ATP = L-tyrosyl-tRNA(Tyr) + AMP + diphosphate + H(+). Catalyzes the attachment of tyrosine to tRNA(Tyr) in a two-step reaction: tyrosine is first activated by ATP to form Tyr-AMP and then transferred to the acceptor end of tRNA(Tyr). This is Tyrosine--tRNA ligase from Haemophilus influenzae (strain 86-028NP).